The chain runs to 506 residues: Acrylate reductase flavoprotein subunit (506 aa).

Positions 1 to 30 (MSNKDLLGRRNFIKGMGAAAGVAMAAPALA) form a signal peptide, tat-type signal. Alanine 54, glutamate 74, asparagine 82, glycine 87, and glycine 88 together coordinate FAD. Arginine 333 functions as the Proton donor in the catalytic mechanism. The FAD site is built by glutamate 473 and isoleucine 489.

Belongs to the FAD-dependent oxidoreductase 2 family. FRD/SDH subfamily. The ArdAB flavocytochrome c is composed of a FAD-containing subunit (ArdA) and a heme c-containing subunit (ArdB). It depends on FAD as a cofactor. Predicted to be exported by the Tat system. The position of the signal peptide cleavage has not been experimentally proven.

The protein resides in the periplasm. Its activity is regulated as follows. Methacrylate acts as a competitive inhibitor of the acrylate reductase activity and suppresses the reductase activity in dose-dependent manner. Its function is as follows. FAD-containing subunit of the ArdAB flavocytochrome c, which catalyzes the reduction of acrylate to propanoate and supports dimethylsulfoniopropionate-dependent anaerobic respiration. In vitro, can use the artificial electron donor methyl viologen. The natural electron donor is probably a low-potential cytochrome c. Also shows weak activity toward methacrylate in vitro (at a 22-fold lower rate) but cannot use other tested 2-enoates, including crotonic, fumaric, sorbic, urocanic, cinnamic, p-coumaric, caffeic or ferulic acids. The protein catalyzes a unidirectional reaction and cannot oxidize propanoate with phenazine metasulfate and dichlorophenolindophenol as electron acceptors. This chain is Acrylate reductase flavoprotein subunit, found in Shewanella woodyi (strain ATCC 51908 / MS32).